The following is a 26-amino-acid chain: Aldehyde dehydrogenase beta chain (26 aa).

In terms of assembly, heterotrimer composed of an alpha, a beta and a gamma chain. FAD is required as a cofactor.

It carries out the reaction an aldehyde + a quinone + H2O = a quinol + a carboxylate + H(+). The chain is Aldehyde dehydrogenase beta chain from Amycolatopsis methanolica.